The sequence spans 777 residues: Intraflagellar transport protein 80 homolog (777 aa).

7 WD repeats span residues 12–50, 104–143, 145–185, 186–225, 227–265, 267–306, and 504–542; these read KHQE…TSLI, AHCG…RSTL, QQGI…LQWK, AHDG…LYGS, PHEH…YALE, PNTG…WEWK, and KLGT…YVDR. Positions 758–777 are disordered; sequence TKERDRSSSGQSSKNTGLKP. The segment covering 765–777 has biased composition (polar residues); it reads SSGQSSKNTGLKP.

Component of the IFT complex B, at least composed of IFT20, IFT22, IFT25, IFT27, IFT46, IFT52, TRAF3IP1/IFT54, IFT57, IFT74, IFT80, IFT81, and IFT88. Interacts with IFT88. Interacts with IFT57 and IFT70B.

It is found in the cytoplasm. It localises to the cytoskeleton. Its subcellular location is the cilium basal body. The protein localises to the cilium axoneme. Component of the intraflagellar transport (IFT) complex B, which is essential for the development and maintenance of motile and sensory cilia. The protein is Intraflagellar transport protein 80 homolog (Ift80) of Rattus norvegicus (Rat).